Consider the following 268-residue polypeptide: Putative hydro-lyase A1S_1268 (268 aa).

Belongs to the D-glutamate cyclase family.

The polypeptide is Putative hydro-lyase A1S_1268 (Acinetobacter baumannii (strain ATCC 17978 / DSM 105126 / CIP 53.77 / LMG 1025 / NCDC KC755 / 5377)).